The following is a 709-amino-acid chain: Elongation factor G (709 aa).

The tr-type G domain occupies 8 to 290 (NRYRNIGISA…AVIQYMPAPQ (283 aa)). GTP contacts are provided by residues 17–24 (AHIDAGKT), 88–92 (DTPGH), and 142–145 (NKMD).

It belongs to the TRAFAC class translation factor GTPase superfamily. Classic translation factor GTPase family. EF-G/EF-2 subfamily.

The protein resides in the cytoplasm. Functionally, catalyzes the GTP-dependent ribosomal translocation step during translation elongation. During this step, the ribosome changes from the pre-translocational (PRE) to the post-translocational (POST) state as the newly formed A-site-bound peptidyl-tRNA and P-site-bound deacylated tRNA move to the P and E sites, respectively. Catalyzes the coordinated movement of the two tRNA molecules, the mRNA and conformational changes in the ribosome. The protein is Elongation factor G of Psychrobacter sp. (strain PRwf-1).